Reading from the N-terminus, the 327-residue chain is Movement protein (327 aa).

Residues 297–327 (SASSSNTENELARVSQNIDLLKNKLKEICGE) adopt a coiled-coil conformation.

Belongs to the caulimoviridae movement protein family. In terms of assembly, homotrimer, through the coiled-coil domain. Interacts with VAP. May interact (via N-terminus) with host prenylated Rab acceptor protein 1D (PRA1D).

Its subcellular location is the host cell junction. It localises to the host plasmodesma. In terms of biological role, transports viral genome to neighboring plant cells directly through plasmosdesmata, without any budding. The movement protein allows efficient cell to cell propagation, by bypassing the host cell wall barrier. Acts by forming tubules structures that increase the size exclusion limit (SEL) of plasmodesmata, thereby allowing viral ribonucleocapsids to spread directly to neighboring cells. The chain is Movement protein from Arabidopsis thaliana (Mouse-ear cress).